A 445-amino-acid chain; its full sequence is MTLFGTDGVRGKAGKKVSAVNTMRLAMATGIYFKQFAKTNKILVGKDTRRSGYMIENALVSGLTAVGFDVIQIGPMPTPAIAFLTENMRCDAGIMISASHNPYYDNGIKFFDSEGNKLNRSEEEKIEEIFADDDALEDAQVTGKYIGKSKRIDDVIGRYIVHIKNSFPKSLSLAGKRVVIDCANGAGYIVGPTVLQELGAEVVVVGDEPDGFNINEGCGAMHPENLAKVVLDKRADIGLALDGDADRLVVVDEKGETVDGDKLMAVLAVHLKNTGELRGDGMVATVMSNQGLEEYLLEHGITVYRSAVGDKNVVEMMQEKGVNFGGEQSGHIIFSDYAKTGDGISSALQALAYLVSTGTKTSEAFNPYESYPQMLVNLPIEEKKPLESIEGLEQLMEQVEAEGMRHLFRYSGTENKIRLLLEGKNEKALETMMDECMDFFKRTLV.

The Phosphoserine intermediate role is filled by S99. Residues S99, D242, D244, and D246 each contribute to the Mg(2+) site. Residue S99 is modified to Phosphoserine.

This sequence belongs to the phosphohexose mutase family. Mg(2+) is required as a cofactor. In terms of processing, activated by phosphorylation.

It carries out the reaction alpha-D-glucosamine 1-phosphate = D-glucosamine 6-phosphate. Its function is as follows. Catalyzes the conversion of glucosamine-6-phosphate to glucosamine-1-phosphate. The polypeptide is Phosphoglucosamine mutase (Sulfurovum sp. (strain NBC37-1)).